A 433-amino-acid polypeptide reads, in one-letter code: Cell division protein FtsZ homolog 1, chloroplastic (433 aa).

The transit peptide at 1–66 (MAIIPLAQLN…TRSKSMRLRC (66 aa)) directs the protein to the chloroplast. Ser67 bears the N-acetylserine mark. GTP-binding positions include 83–87 (GGGNN), 170–172 (GTG), Glu201, Arg205, and Asp249. The interval 399-433 (GSSGQQENKGMSLPHQKQSPSTISTKSSSPRRLFF) is disordered. Positions 414-433 (QKQSPSTISTKSSSPRRLFF) are enriched in low complexity.

Belongs to the FtsZ family. Aggregates to form a contractile ring-like structure; contraction of the ring was accompanied by an increase in the filament turnover rate. This aggregation is regulated in midchloroplast stroma by MIND1 (repressor) and MINE1 (promoter). Self-interacts and binds to FTSZ2-1 in heteromers to form two morphologically distinct types of filaments, termed type-I (smooth filaments) and type-II (rough filaments), in a GTP-dependent manner. Interacts with ARC3. Part of a complex made of ARC3, ARC6, FTSZ1 and FTSZ2. In terms of tissue distribution, in pollen grain, restricted to plastids of vegetative cells. Also present in pollen tubes plastids.

The protein resides in the plastid. The protein localises to the chloroplast stroma. It is found in the chloroplast thylakoid membrane. Exhibits GTPase activity. Component of the plastid division machinery that forms a contractile ring at the division site. Required for plastid division in a dose-dependent manner. Involved in epidermal plastids division in a MINE1-dependent manner. Involved in blue light-induced chloroplast movements. May regulate thylakoid development. In the vegetative shoot apex, at the shoot apical meristem (SAM), where the proplastid-to-chloroplast transition takes place, contributes equally with FTSZ2-1 in the L2 layer to plastid division. The protein is Cell division protein FtsZ homolog 1, chloroplastic of Arabidopsis thaliana (Mouse-ear cress).